The primary structure comprises 236 residues: Small ribosomal subunit protein uS2c (236 aa).

This sequence belongs to the universal ribosomal protein uS2 family.

It is found in the plastid. Its subcellular location is the chloroplast. This is Small ribosomal subunit protein uS2c (rps2) from Glycine max (Soybean).